We begin with the raw amino-acid sequence, 205 residues long: MLALVVALASHRGIGNANALPWPRPLAADMAWFRTLSQSIPLISPDRIALAPSASNAVVMGRRTWDSIPSRFRPLANRINVVLSRGPARSTENTFFIQTFEALDSLPLPPSSMTFVIGGRDVYSLALESGRPHLIFATEVFESPECDVFFPHIDWASYEKRDITRDVSRLIDRTLASAFYSPETATFTENGTSFKMFLYTKPETR.

A DHFR domain is found at 1-201; it reads MLALVVALAS…TSFKMFLYTK (201 aa). Residues Ala-7 and 13–19 each bind NADP(+); that span reads GIGNANA. Residue 29–34 participates in substrate binding; it reads DMAWFR. 62–64 contributes to the NADP(+) binding site; sequence RRT. Arg-78 contributes to the substrate binding site. NADP(+)-binding positions include 84-86 and 118-125; these read SRG and GGRDVYSL.

Belongs to the dihydrofolate reductase family.

It carries out the reaction (6S)-5,6,7,8-tetrahydrofolate + NADP(+) = 7,8-dihydrofolate + NADPH + H(+). It functions in the pathway cofactor biosynthesis; tetrahydrofolate biosynthesis; 5,6,7,8-tetrahydrofolate from 7,8-dihydrofolate: step 1/1. Key enzyme in folate metabolism. Catalyzes an essential reaction for de novo glycine and purine synthesis, and for DNA precursor synthesis. This Encephalitozoon cuniculi (strain GB-M1) (Microsporidian parasite) protein is Dihydrofolate reductase (DHFR-1).